The chain runs to 188 residues: MSIKSDKWIRRMSEQHGMIEPFEAGQVRESEKGRVISYGTSSYGYDVRCSNEFKIFTNVHSATVDPKNFDENSFVNYTGDVCIIPPNSFALARTVEYFRIPRSVLTICLGKSTYARCGIIVNVTPLEPEWEGQVTLEFSNTTNLPAKIYANEGVAQMLFFESDEICETSYKDRGGKYLGQTGVTLPRT.

DCTP is bound by residues 111 to 116, 135 to 137, Gln-156, Tyr-170, and Gln-180; these read KSTYAR and TLE. The active-site Proton donor/acceptor is Glu-137.

It belongs to the dCTP deaminase family. In terms of assembly, homotrimer.

It catalyses the reaction dCTP + H2O + H(+) = dUTP + NH4(+). It participates in pyrimidine metabolism; dUMP biosynthesis; dUMP from dCTP (dUTP route): step 1/2. Catalyzes the deamination of dCTP to dUTP. The chain is dCTP deaminase from Marinobacter nauticus (strain ATCC 700491 / DSM 11845 / VT8) (Marinobacter aquaeolei).